The primary structure comprises 211 residues: Mitotic spindle assembly checkpoint protein MAD2B (211 aa).

The region spanning 13-203 (QVVADILCEF…SDILKMQLYV (191 aa)) is the HORMA domain.

In terms of assembly, homooligomer. Interacts with rev1. Interacts with rev3l. Interacts with fzr1 (in complex with the anaphase promoting complex APC). May interact with cdc20.

Its subcellular location is the nucleus. The protein localises to the cytoplasm. It is found in the cytoskeleton. The protein resides in the spindle. In terms of biological role, adapter protein able to interact with different proteins and involved in different biological processes. Mediates the interaction between the error-prone DNA polymerase zeta catalytic subunit rev3l and the inserter polymerase rev1, thereby mediating the second polymerase switching in translesion DNA synthesis. Translesion DNA synthesis releases the replication blockade of replicative polymerases, stalled in presence of DNA lesions. May also play a role in signal transduction in response to DNA damage. May regulate the activation of the anaphase promoting complex APC thereby regulating progression through the cell cycle. Through transcriptional regulation may play a role in epithelial-mesenchymal transdifferentiation. This is Mitotic spindle assembly checkpoint protein MAD2B (mad2l2) from Danio rerio (Zebrafish).